The chain runs to 523 residues: Maintenance of mitochondrial morphology protein 1 (523 aa).

At 1-43 (MAGSTSASLQTPYFPSSTQINPVRVDHTLPLPPSQPSLSFTQG) the chain is on the lumenal side. A helical transmembrane segment spans residues 44–64 (LLVGQLSVVLLIGAFIKFFIF). The Cytoplasmic segment spans residues 65 to 523 (GEAPPPPSRG…GSMPDTVTET (459 aa)). Disordered stretches follow at residues 70–118 (PPSR…SSST), 128–147 (YYSA…RLYH), 295–349 (TSDQ…SKHG), 420–474 (RTGL…DRGL), and 492–523 (GGHQ…VTET). Composition is skewed to polar residues over residues 74-96 (GLSN…TDSS) and 105-118 (STSN…SSST). Basic residues predominate over residues 137–147 (TPKHGRPRLYH). An SMP-LTD domain is found at 151–412 (QPESLDWFNV…EPRVQVVGLP (262 aa)). Residues 295-312 (TSDQTMSPIPTPHDTTSE) show a composition bias toward polar residues. The segment covering 449–468 (GVSGGGGSGGGSGGGGGGMR) has biased composition (gly residues).

Belongs to the MMM1 family. Homodimer. Component of the ER-mitochondria encounter structure (ERMES) or MDM complex, composed of MMM1, MDM10, MDM12 and MDM34. An MMM1 homodimer associates with one molecule of MDM12 on each side in a pairwise head-to-tail manner, and the SMP-LTD domains of MMM1 and MDM12 generate a continuous hydrophobic tunnel for phospholipid trafficking.

It is found in the endoplasmic reticulum membrane. Component of the ERMES/MDM complex, which serves as a molecular tether to connect the endoplasmic reticulum (ER) and mitochondria. Components of this complex are involved in the control of mitochondrial shape and protein biogenesis, and function in nonvesicular lipid trafficking between the ER and mitochondria. The MDM12-MMM1 subcomplex functions in the major beta-barrel assembly pathway that is responsible for biogenesis of all outer membrane beta-barrel proteins, and acts in a late step after the SAM complex. The MDM10-MDM12-MMM1 subcomplex further acts in the TOM40-specific pathway after the action of the MDM12-MMM1 complex. Essential for establishing and maintaining the structure of mitochondria and maintenance of mtDNA nucleoids. The polypeptide is Maintenance of mitochondrial morphology protein 1 (Paracoccidioides lutzii (strain ATCC MYA-826 / Pb01) (Paracoccidioides brasiliensis)).